The sequence spans 40 residues: Photosystem II reaction center protein X (40 aa).

Residues 10-30 (WSLVWGTVIVVIPVTVGLVFI) form a helical membrane-spanning segment.

The protein belongs to the PsbX family. Type 1 subfamily. As to quaternary structure, PSII is composed of 1 copy each of membrane proteins PsbA, PsbB, PsbC, PsbD, PsbE, PsbF, PsbH, PsbI, PsbJ, PsbK, PsbL, PsbM, PsbT, PsbX, PsbY, PsbZ, Psb30/Ycf12, peripheral proteins PsbO, CyanoQ (PsbQ), PsbU, PsbV and a large number of cofactors. It forms dimeric complexes.

It is found in the cellular thylakoid membrane. Functionally, involved in the binding and/or turnover of quinones at the Q(B) site of photosystem II (PSII). PSII is a light-driven water plastoquinone oxidoreductase, using light energy to abstract electrons from H(2)O, generating a proton gradient subsequently used for ATP formation. This is Photosystem II reaction center protein X from Crocosphaera subtropica (strain ATCC 51142 / BH68) (Cyanothece sp. (strain ATCC 51142)).